A 368-amino-acid chain; its full sequence is Aminomethyltransferase (368 aa).

Belongs to the GcvT family. The glycine cleavage system is composed of four proteins: P, T, L and H.

The enzyme catalyses N(6)-[(R)-S(8)-aminomethyldihydrolipoyl]-L-lysyl-[protein] + (6S)-5,6,7,8-tetrahydrofolate = N(6)-[(R)-dihydrolipoyl]-L-lysyl-[protein] + (6R)-5,10-methylene-5,6,7,8-tetrahydrofolate + NH4(+). The glycine cleavage system catalyzes the degradation of glycine. The sequence is that of Aminomethyltransferase from Thermoanaerobacter sp. (strain X514).